The primary structure comprises 434 residues: Putative magnesium transporter MRS2-D (434 aa).

Disordered stretches follow at residues 1–21, 126–171, and 279–311; these read MAARRRHVAAGAGAPAPAAGE, AASP…DGEA, and EASELEDHSSRDEEGVEGGGGGDGDDETIAGGG. The span at 9-21 shows a compositional bias: low complexity; that stretch reads AAGAGAPAPAAGE. The span at 279–291 shows a compositional bias: basic and acidic residues; sequence EASELEDHSSRDE. The next 2 helical transmembrane spans lie at 367–387 and 405–425; these read GILLSTGTLVSSCAIAVTGVF and FPCAAAGIVAGSLALYLAALL.

It belongs to the CorA metal ion transporter (MIT) (TC 1.A.35.5) family.

The protein localises to the membrane. Putative magnesium transporter. The sequence is that of Putative magnesium transporter MRS2-D (MRS2-D) from Oryza sativa subsp. indica (Rice).